The chain runs to 403 residues: Aspartic protease pepA (403 aa).

The N-terminal stretch at 1-20 is a signal peptide; sequence MVLITQLGAALAVFSALTVA. The propeptide at 21-67 is activation peptide; that stretch reads APTKGKARFSAPQVGIPKKAKHHPAAAYARALHKFGMKIPKAVSDAA. In terms of domain architecture, Peptidase A1 spans 82-400; that stretch reads YVTQVTVGGS…DTQGPRIGFA (319 aa). Asp98 is a catalytic residue. An N-linked (GlcNAc...) asparagine glycan is attached at Asn270. Asp293 is a catalytic residue. Cys329 and Cys362 form a disulfide bridge.

It belongs to the peptidase A1 family. Monomer.

The protein localises to the secreted. Secreted aspartic endopeptidase that allows assimilation of proteinaceous substrates. The scissile peptide bond is attacked by a nucleophilic water molecule activated by two aspartic residues in the active site. Shows a broad primary substrate specificity. Favors hydrophobic residues at the P1 and P1' positions. In Arthroderma gypseum (strain ATCC MYA-4604 / CBS 118893) (Microsporum gypseum), this protein is Aspartic protease pepA.